The chain runs to 330 residues: Peptide transport system ATP-binding protein SapD (330 aa).

An ABC transporter domain is found at 6–259 (IRNLTIEFKT…PHHPYTQALI (254 aa)). ATP is bound at residue 40 to 47 (GESGSGKS).

The protein belongs to the ABC transporter superfamily.

It is found in the cell inner membrane. Its function is as follows. Involved in a peptide intake transport system that plays a role in the resistance to antimicrobial peptides. This chain is Peptide transport system ATP-binding protein SapD (sapD), found in Escherichia coli O157:H7.